Reading from the N-terminus, the 233-residue chain is Probable fimbrial chaperone protein ElfD (233 aa).

Residues 1–26 (MKTCITKGIVTVSLTAILLSCSSAWA) form the signal peptide.

This sequence belongs to the periplasmic pilus chaperone family.

It is found in the periplasm. Functionally, part of the elfADCG-ycbUVF fimbrial operon, which promotes adhesion of bacteria to different abiotic surfaces. Could be required for the biogenesis of the ElfA fimbriae. The sequence is that of Probable fimbrial chaperone protein ElfD (elfD) from Escherichia coli (strain K12).